Here is a 252-residue protein sequence, read N- to C-terminus: Trans-aconitate 2-methyltransferase (252 aa).

Belongs to the methyltransferase superfamily. Tam family.

Its subcellular location is the cytoplasm. It catalyses the reaction trans-aconitate + S-adenosyl-L-methionine = (E)-3-(methoxycarbonyl)pent-2-enedioate + S-adenosyl-L-homocysteine. Functionally, catalyzes the S-adenosylmethionine monomethyl esterification of trans-aconitate. This is Trans-aconitate 2-methyltransferase from Escherichia coli O139:H28 (strain E24377A / ETEC).